We begin with the raw amino-acid sequence, 299 residues long: Homoserine O-acetyltransferase (299 aa).

The active-site Acyl-thioester intermediate is the Cys142. Residues Lys163 and Ser192 each contribute to the substrate site. Catalysis depends on His235, which acts as the Proton acceptor. The active site involves Glu237. Arg249 provides a ligand contact to substrate.

It belongs to the MetA family.

Its subcellular location is the cytoplasm. The enzyme catalyses L-homoserine + acetyl-CoA = O-acetyl-L-homoserine + CoA. It functions in the pathway amino-acid biosynthesis; L-methionine biosynthesis via de novo pathway; O-acetyl-L-homoserine from L-homoserine: step 1/1. Transfers an acetyl group from acetyl-CoA to L-homoserine, forming acetyl-L-homoserine. The sequence is that of Homoserine O-acetyltransferase from Synechococcus sp. (strain ATCC 27144 / PCC 6301 / SAUG 1402/1) (Anacystis nidulans).